The primary structure comprises 300 residues: Solute carrier family 25 member 35 (300 aa).

Solcar repeat units lie at residues 1-90, 100-193, and 203-294; these read MDFL…AEAG, HSPA…TKDL, and QSWK…LRSL. The next 6 membrane-spanning stretches (helical) occupy residues 38–58, 59–79, 91–119, 169–190, 205–225, and 277–300; these read TYQR…KVDG, LAAL…MNGI, GYLH…GAYL, ALGG…FSST, WKLA…AMAP, and LGPH…TDTK.

This sequence belongs to the mitochondrial carrier (TC 2.A.29) family.

Its subcellular location is the mitochondrion inner membrane. The catalysed reaction is a dicarboxylate(in) + sulfate(out) = a dicarboxylate(out) + sulfate(in). Its function is as follows. Putative antiporter that exchanges dicarboxylates and sulfur oxoanions across the inner membrane of mitochondria. The sequence is that of Solute carrier family 25 member 35 (SLC25A35) from Homo sapiens (Human).